Here is a 95-residue protein sequence, read N- to C-terminus: MNLKPLADRVIVKPAPAEEKTKGGLYIPDTGKEKPMYGEVVAVGPGKVSDAGQVVAMQVKAGDKVLYGKYSGTEVHVEGEDYLIMRESDIFAILG.

Belongs to the GroES chaperonin family. Heptamer of 7 subunits arranged in a ring. Interacts with the chaperonin GroEL.

The protein resides in the cytoplasm. Its function is as follows. Together with the chaperonin GroEL, plays an essential role in assisting protein folding. The GroEL-GroES system forms a nano-cage that allows encapsulation of the non-native substrate proteins and provides a physical environment optimized to promote and accelerate protein folding. GroES binds to the apical surface of the GroEL ring, thereby capping the opening of the GroEL channel. The chain is Co-chaperonin GroES from Chlorobaculum tepidum (strain ATCC 49652 / DSM 12025 / NBRC 103806 / TLS) (Chlorobium tepidum).